The chain runs to 172 residues: 3-hydroxydecanoyl-[acyl-carrier-protein] dehydratase (172 aa).

The active site involves H71.

Belongs to the thioester dehydratase family. FabA subfamily. In terms of assembly, homodimer.

Its subcellular location is the cytoplasm. The catalysed reaction is a (3R)-hydroxyacyl-[ACP] = a (2E)-enoyl-[ACP] + H2O. It carries out the reaction (3R)-hydroxydecanoyl-[ACP] = (2E)-decenoyl-[ACP] + H2O. It catalyses the reaction (2E)-decenoyl-[ACP] = (3Z)-decenoyl-[ACP]. It functions in the pathway lipid metabolism; fatty acid biosynthesis. In terms of biological role, necessary for the introduction of cis unsaturation into fatty acids. Catalyzes the dehydration of (3R)-3-hydroxydecanoyl-ACP to E-(2)-decenoyl-ACP and then its isomerization to Z-(3)-decenoyl-ACP. Can catalyze the dehydratase reaction for beta-hydroxyacyl-ACPs with saturated chain lengths up to 16:0, being most active on intermediate chain length. The protein is 3-hydroxydecanoyl-[acyl-carrier-protein] dehydratase of Klebsiella pneumoniae (strain 342).